The chain runs to 273 residues: Phosphatidylglycerol--prolipoprotein diacylglyceryl transferase (273 aa).

The next 3 helical transmembrane spans lie at 20–40 (LAVRWYALAYMVSFIIALPIA), 59–79 (FLFYAILGVLLGGRLGYVLFY), and 97–117 (GGMSFHGGALGVILALAYFSW). Arg-142 contacts a 1,2-diacyl-sn-glycero-3-phospho-(1'-sn-glycerol). The next 2 membrane-spanning stretches (helical) occupy residues 206 to 226 (FGFLSGLFLFGYACARSFCEF) and 243 to 263 (MGQLLCIPMALAGMGLMVYAM).

Belongs to the Lgt family.

It is found in the cell inner membrane. It carries out the reaction L-cysteinyl-[prolipoprotein] + a 1,2-diacyl-sn-glycero-3-phospho-(1'-sn-glycerol) = an S-1,2-diacyl-sn-glyceryl-L-cysteinyl-[prolipoprotein] + sn-glycerol 1-phosphate + H(+). It functions in the pathway protein modification; lipoprotein biosynthesis (diacylglyceryl transfer). Its function is as follows. Catalyzes the transfer of the diacylglyceryl group from phosphatidylglycerol to the sulfhydryl group of the N-terminal cysteine of a prolipoprotein, the first step in the formation of mature lipoproteins. This chain is Phosphatidylglycerol--prolipoprotein diacylglyceryl transferase, found in Gluconobacter oxydans (strain 621H) (Gluconobacter suboxydans).